Here is a 603-residue protein sequence, read N- to C-terminus: Isocitrate dehydrogenase kinase/phosphatase (603 aa).

Residues 327 to 333 (APGIKGL) and Lys-348 each bind ATP. The active site involves Asp-383.

This sequence belongs to the AceK family.

The protein localises to the cytoplasm. The enzyme catalyses L-seryl-[isocitrate dehydrogenase] + ATP = O-phospho-L-seryl-[isocitrate dehydrogenase] + ADP + H(+). Bifunctional enzyme which can phosphorylate or dephosphorylate isocitrate dehydrogenase (IDH) on a specific serine residue. This is a regulatory mechanism which enables bacteria to bypass the Krebs cycle via the glyoxylate shunt in response to the source of carbon. When bacteria are grown on glucose, IDH is fully active and unphosphorylated, but when grown on acetate or ethanol, the activity of IDH declines drastically concomitant with its phosphorylation. The chain is Isocitrate dehydrogenase kinase/phosphatase from Burkholderia mallei (strain ATCC 23344).